We begin with the raw amino-acid sequence, 365 residues long: Spermidine/putrescine import ATP-binding protein PotA (365 aa).

Positions 9 to 239 (IRLTNVTKSY…PINHFVANFI (231 aa)) constitute an ABC transporter domain. 41-48 (GPSGCGKT) provides a ligand contact to ATP.

Belongs to the ABC transporter superfamily. Spermidine/putrescine importer (TC 3.A.1.11.1) family. As to quaternary structure, the complex is composed of two ATP-binding proteins (PotA), two transmembrane proteins (PotB and PotC) and a solute-binding protein (PotD).

It localises to the cell membrane. It carries out the reaction ATP + H2O + polyamine-[polyamine-binding protein]Side 1 = ADP + phosphate + polyamineSide 2 + [polyamine-binding protein]Side 1.. Part of the ABC transporter complex PotABCD involved in spermidine/putrescine import. Responsible for energy coupling to the transport system. In Lactiplantibacillus plantarum (strain ATCC BAA-793 / NCIMB 8826 / WCFS1) (Lactobacillus plantarum), this protein is Spermidine/putrescine import ATP-binding protein PotA.